We begin with the raw amino-acid sequence, 235 residues long: Cytochrome c-554 (235 aa).

Positions 1 to 24 (MKIMIACGLVAAALFTLTSGQSLA) are cleaved as a signal peptide. Heme-binding residues include Cys-35, Cys-38, His-39, His-51, Cys-84, Cys-87, His-88, Cys-112, Cys-115, His-116, His-126, Cys-158, Cys-161, His-162, and His-203. Residues 121-144 (NFRGDHRKSGQAFEKSGKKTPRKD) form a disordered region.

Binds 4 heme groups per subunit.

It localises to the periplasm. Involved in ammonia oxidation; accepts electrons directly from hydroxylamine oxidoreductase (HAO). The protein is Cytochrome c-554 (cycA1) of Nitrosomonas europaea (strain ATCC 19718 / CIP 103999 / KCTC 2705 / NBRC 14298).